We begin with the raw amino-acid sequence, 357 residues long: CD4+ T-cell-stimulating antigen (357 aa).

Positions Met-1 to Ala-22 are cleaved as a signal peptide. Cys-23 carries N-palmitoyl cysteine lipidation. Residue Cys-23 is the site of S-diacylglycerol cysteine attachment.

Belongs to the BMP lipoprotein family.

The protein resides in the cell membrane. The polypeptide is CD4+ T-cell-stimulating antigen (tcsA) (Listeria monocytogenes serovar 1/2a (strain ATCC BAA-679 / EGD-e)).